The chain runs to 387 residues: Na(+)/H(+) antiporter NhaA (387 aa).

Helical transmembrane passes span Ala16–Ile36, Ile53–Leu73, Leu89–Phe109, Gly118–Gly138, Val147–Phe167, Gly171–Asn191, Ile197–Val217, Thr220–Ile240, Pro251–Ser271, Ile283–Ile303, Val321–Leu341, and Ile354–Thr374.

This sequence belongs to the NhaA Na(+)/H(+) (TC 2.A.33) antiporter family.

It is found in the cell inner membrane. The catalysed reaction is Na(+)(in) + 2 H(+)(out) = Na(+)(out) + 2 H(+)(in). In terms of biological role, na(+)/H(+) antiporter that extrudes sodium in exchange for external protons. The chain is Na(+)/H(+) antiporter NhaA from Cytophaga hutchinsonii (strain ATCC 33406 / DSM 1761 / CIP 103989 / NBRC 15051 / NCIMB 9469 / D465).